A 326-amino-acid chain; its full sequence is Phospho-N-acetylmuramoyl-pentapeptide-transferase (326 aa).

The next 10 membrane-spanning stretches (helical) occupy residues 4-24 (IWVA…LVIP), 49-69 (TPTM…FLLI), 74-94 (GLIV…DDYI), 109-129 (KLLG…FEAG), 151-171 (LGWW…SNAV), 179-199 (GLAA…ALAA), 203-223 (GVAA…FFNF), 228-248 (VFMG…AAVV), 254-274 (LFLI…IQVI), and 303-323 (VVIT…AGLY).

This sequence belongs to the glycosyltransferase 4 family. MraY subfamily. Mg(2+) is required as a cofactor.

The protein resides in the cell membrane. It catalyses the reaction UDP-N-acetyl-alpha-D-muramoyl-L-alanyl-gamma-D-glutamyl-meso-2,6-diaminopimeloyl-D-alanyl-D-alanine + di-trans,octa-cis-undecaprenyl phosphate = di-trans,octa-cis-undecaprenyl diphospho-N-acetyl-alpha-D-muramoyl-L-alanyl-D-glutamyl-meso-2,6-diaminopimeloyl-D-alanyl-D-alanine + UMP. The protein operates within cell wall biogenesis; peptidoglycan biosynthesis. Catalyzes the initial step of the lipid cycle reactions in the biosynthesis of the cell wall peptidoglycan: transfers peptidoglycan precursor phospho-MurNAc-pentapeptide from UDP-MurNAc-pentapeptide onto the lipid carrier undecaprenyl phosphate, yielding undecaprenyl-pyrophosphoryl-MurNAc-pentapeptide, known as lipid I. The sequence is that of Phospho-N-acetylmuramoyl-pentapeptide-transferase from Pelotomaculum thermopropionicum (strain DSM 13744 / JCM 10971 / SI).